A 91-amino-acid polypeptide reads, in one-letter code: C-C motif chemokine 5 (91 aa).

Residues 1–23 form the signal peptide; that stretch reads MKVSATAFAVLLMAAALCAPASA. Disulfide bonds link Cys-33–Cys-57 and Cys-34–Cys-73.

This sequence belongs to the intercrine beta (chemokine CC) family.

It localises to the secreted. Its function is as follows. Chemoattractant for blood monocytes, memory T-helper cells and eosinophils. Causes the release of histamine from basophils and activates eosinophils. May activate several chemokine receptors including CCR1, CCR3, CCR4 and CCR5. May also be an agonist of the G protein-coupled receptor GPR75. Together with GPR75, may play a role in neuron survival through activation of a downstream signaling pathway involving the PI3, Akt and MAP kinases. By activating GPR75 may also play a role in insulin secretion by islet cells. In Bos taurus (Bovine), this protein is C-C motif chemokine 5 (CCL5).